The primary structure comprises 576 residues: MNKLYIGNLNESVTPADLEKVFNDHKISFSGQFLVKSGYAFVDCPDEQWAMKAIETFSGKVELHGKQLEIEHSVPKKQRSRKIQIRNIPPQLRWEVLDGLLAQYGTVENCEQVNTDSETAVVNVTYTNREQTRQAIMKLNGHQLENHVLKVSYIPDEQSVQGPENGRRGGFGARGAPRQGSPVTAGAPVKQQPVDIPLRLLVPTQYVGAIIGKEGATIRNITKQTQSKIDVHRKENAGAAEKAISIHSTPEGCSAACKMILEIMQKEAKDTKTADEVPLKILAHNNFVGRLIGKEGRNLKKVEQDTETKITISSLQDLTLYNPERTITVKGSIENCCKAEQEIMKKVREAYENDVAAMSLQSHLIPGLNLAAVGLFPASSNAVPPPPSSVSGAAPYSSFMPPEQETVHVFIPAQAVGAIIGKKGQHIKQLSRFASASIKIAPPETPDSKVRMVVITGPPEAQFKAQGRIYGKLKEENFFGPKEEVKLETHIRVPASAAGRVIGKGGKTVNELQNLTAAEVVVPRDQTPDENEQVIVKIIGHFYASQMAQRKIRDILAQVKQQHQKGQSGQLQARRK.

RRM domains lie at Asn2–Pro75 and Arg81–Asp156. The segment at Gln158 to Val189 is disordered. KH domains lie at Asp195 to Ile260 and Glu276 to Ile343. Tyr396 is subject to Phosphotyrosine; by SRC. KH domains are found at residues Gln404–Ile469 and Lys486–Ile552.

This sequence belongs to the RRM IMP/VICKZ family. In terms of assembly, can form homooligomers and heterooligomers with IGF2BP1 and IGF2BP3 in an RNA-dependent manner. Associates with the cytoskeleton, predominantly with actin filament bundles and occasionally with microtubules. In a heterologous system, interacts with ELAVL1, DHX9 and HNRNPU. In terms of processing, phosphorylated by SRC at Tyr-396. This residue is involved in ACTB mRNA binding, its phosphorylation impairs association with ACTB mRNA and hence abolishes translational repression. Phosphorylation occurs in close proximity to filopodia and in the growth cones of differentiated neuroglioblastoma cells. As to expression, expressed in neurons and embryonic fibroblasts (at protein level).

The protein resides in the nucleus. The protein localises to the cytoplasm. It localises to the perinuclear region. Its subcellular location is the P-body. It is found in the stress granule. The protein resides in the cell projection. The protein localises to the growth cone. It localises to the filopodium. Its subcellular location is the lamellipodium. In terms of biological role, RNA-binding factor that recruits target transcripts to cytoplasmic protein-RNA complexes (mRNPs). This transcript 'caging' into mRNPs allows mRNA transport and transient storage. It also modulates the rate and location at which target transcripts encounter the translational apparatus and shields them from endonuclease attacks or microRNA-mediated degradation. Preferentially binds to N6-methyladenosine (m6A)-containing mRNAs and increases their stability. Plays a direct role in the transport and translation of transcripts required for axonal regeneration in adult sensory neurons. Regulates localized beta-actin/ACTB mRNA translation in polarized cells, a crucial process for cell migration and neurite outgrowth. Co-transcriptionally associates with the ACTB mRNA in the nucleus. This binding involves by a conserved 54-nucleotide element in the ACTB mRNA 3'-UTR, known as the 'zipcode'. The ribonucleoparticle (RNP) thus formed is exported to the cytoplasm, binds to a motor protein and is transported along the cytoskeleton to the cell periphery. During transport, IGF2BP1 prevents beta-actin mRNA from being translated into protein. When the RNP complex reaches its destination near the plasma membrane, IGF2BP1 is phosphorylated by SRC. This releases the mRNA, allowing ribosomal 40S and 60S subunits to assemble and initiate ACTB protein synthesis. The monomeric ACTB protein then assembles into the subcortical actin cytoskeleton, which pushes the leading edge onwards. Binds MYC mRNA. Binding to MYC mRNA is enhanced by m6A-modification of the CRD. Promotes the directed movement of cells by fine-tuning intracellular signaling networks. Binds to MAPK4 3'-UTR and inhibits its translation. Interacts with PTEN transcript open reading frame (ORF) and prevents mRNA decay. This combined action on MAPK4 (down-regulation) and PTEN (up-regulation) antagonizes HSPB1 phosphorylation, consequently it prevents G-actin sequestration by phosphorylated HSPB1, allowing F-actin polymerization. Hence enhances the velocity of cell migration and stimulates directed cell migration by PTEN-modulated polarization. This chain is Insulin-like growth factor 2 mRNA-binding protein 1 (IGF2BP1), found in Gallus gallus (Chicken).